Here is a 1560-residue protein sequence, read N- to C-terminus: Lysine-specific demethylase 5C (1560 aa).

Positions Cys14–Pro55 constitute a JmjN domain. An ARID domain is found at Thr79–Ser169. Residues Leu197–Asn207 show a composition bias toward polar residues. The tract at residues Leu197–Ile227 is disordered. Residues Lys205, Lys229, Lys244, and Lys274 each participate in a glycyl lysine isopeptide (Lys-Gly) (interchain with G-Cter in SUMO2) cross-link. Ser287 is modified (phosphoserine). Residue Lys295 forms a Glycyl lysine isopeptide (Lys-Gly) (interchain with G-Cter in SUMO2) linkage. Phosphoserine is present on residues Ser301 and Ser317. The PHD-type 1 zinc-finger motif lies at Val326–Val372. Tyr440 serves as a coordination point for 2-oxoglutarate. Positions Glu468–Arg634 constitute a JmjC domain. Residues His514 and Glu516 each contribute to the Fe cation site. 2-oxoglutarate-binding residues include Ser522, Asn524, and Lys532. His602 contacts Fe cation. A C5HC2 zinc finger spans residues Cys707–Met759. Phosphoserine occurs at positions 893 and 897. Lys1127 is covalently cross-linked (Glycyl lysine isopeptide (Lys-Gly) (interchain with G-Cter in SUMO2)). The segment at Ile1161–Ala1181 is disordered. The segment covering Ser1169–Ala1181 has biased composition (low complexity). Residues Ile1187–Met1248 form a PHD-type 2 zinc finger. 2 disordered regions span residues Gln1316 to Lys1371 and Glu1444 to Leu1560. A compositionally biased stretch (basic and acidic residues) spans Pro1335–Pro1345. Ser1359 is modified (phosphoserine). Over residues Ser1448–Val1463 the composition is skewed to basic residues. The span at Asp1464 to Arg1481 shows a compositional bias: basic and acidic residues. Over residues Glu1488 to Gly1503 the composition is skewed to acidic residues. Over residues Ser1516–Thr1544 the composition is skewed to polar residues.

This sequence belongs to the JARID1 histone demethylase family. As to quaternary structure, part of two distinct complexes, one containing E2F6, and the other containing REST. Interacts with ZMYND8. Fe(2+) serves as cofactor. As to expression, expressed in all tissues examined. Highest levels found in brain and skeletal muscle.

Its subcellular location is the nucleus. It carries out the reaction N(6),N(6),N(6)-trimethyl-L-lysyl(4)-[histone H3] + 3 2-oxoglutarate + 3 O2 = L-lysyl(4)-[histone H3] + 3 formaldehyde + 3 succinate + 3 CO2. The inhibitor KDOAM-25 and others inhibit its demethylase activity, resulting to cell cycle arrest in myeloma cells. In terms of biological role, histone demethylase that specifically demethylates 'Lys-4' of histone H3, thereby playing a central role in histone code. Does not demethylate histone H3 'Lys-9', H3 'Lys-27', H3 'Lys-36', H3 'Lys-79' or H4 'Lys-20'. Demethylates trimethylated and dimethylated but not monomethylated H3 'Lys-4'. Participates in transcriptional repression of neuronal genes by recruiting histone deacetylases and REST at neuron-restrictive silencer elements. Represses the CLOCK-BMAL1 heterodimer-mediated transcriptional activation of the core clock component PER2. The sequence is that of Lysine-specific demethylase 5C from Homo sapiens (Human).